We begin with the raw amino-acid sequence, 176 residues long: ATP synthase subunit b (176 aa).

Residues 27-47 form a helical membrane-spanning segment; sequence FFVFSFLTLILVVTIVTLLVY.

It belongs to the ATPase B chain family. In terms of assembly, F-type ATPases have 2 components, F(1) - the catalytic core - and F(0) - the membrane proton channel. F(1) has five subunits: alpha(3), beta(3), gamma(1), delta(1), epsilon(1). F(0) has three main subunits: a(1), b(2) and c(10-14). The alpha and beta chains form an alternating ring which encloses part of the gamma chain. F(1) is attached to F(0) by a central stalk formed by the gamma and epsilon chains, while a peripheral stalk is formed by the delta and b chains.

Its subcellular location is the cell membrane. Its function is as follows. F(1)F(0) ATP synthase produces ATP from ADP in the presence of a proton or sodium gradient. F-type ATPases consist of two structural domains, F(1) containing the extramembraneous catalytic core and F(0) containing the membrane proton channel, linked together by a central stalk and a peripheral stalk. During catalysis, ATP synthesis in the catalytic domain of F(1) is coupled via a rotary mechanism of the central stalk subunits to proton translocation. In terms of biological role, component of the F(0) channel, it forms part of the peripheral stalk, linking F(1) to F(0). The polypeptide is ATP synthase subunit b (Metamycoplasma arthritidis (strain 158L3-1) (Mycoplasma arthritidis)).